The following is a 1177-amino-acid chain: Lon protease homolog, mitochondrial (1177 aa).

Disordered stretches follow at residues 72–197 and 353–386; these read RTNS…KSPA and AKKA…DSST. The segment covering 103–150 has biased composition (basic and acidic residues); the sequence is RGRELWVQEKDKSDKPEKSDKPDKTDKTDKDKPEKQDKDKTDKPEKTK. The segment covering 154 to 182 has biased composition (low complexity); that stretch reads TPSSTASTGAGEAAAPPSAPPSGSGSSSS. Residues 203–505 form the Lon N-terminal domain; that stretch reads ILAVPISDRP…RALILLKREH (303 aa). The segment covering 353-383 has biased composition (basic and acidic residues); the sequence is AKKAKSGKTEDSKHDSKVTSKDGKETTEKYD. 657 to 664 serves as a coordination point for ATP; sequence GPPGVGKT. Basic and acidic residues predominate over residues 883-916; that stretch reads EKDKESAEKKTTKSKSKEVNEEPAAKEEKDKATE. Residues 883–932 are disordered; sequence EKDKESAEKKTTKSKSKEVNEEPAAKEEKDKATESAESSETKVGTKAPPV. Positions 964 to 1150 constitute a Lon proteolytic domain; it reads DPPPGVVMGL…QDVYDVVFQG (187 aa). Active-site residues include S1056 and K1099.

The protein belongs to the peptidase S16 family. In terms of assembly, homohexamer or homoheptamer. Organized in a ring with a central cavity.

The protein localises to the mitochondrion matrix. It catalyses the reaction Hydrolysis of proteins in presence of ATP.. In terms of biological role, ATP-dependent serine protease that mediates the selective degradation of misfolded, unassembled or oxidatively damaged polypeptides as well as certain short-lived regulatory proteins in the mitochondrial matrix. May also have a chaperone function in the assembly of inner membrane protein complexes. Participates in the regulation of mitochondrial gene expression and in the maintenance of the integrity of the mitochondrial genome. Binds to mitochondrial DNA in a site-specific manner. The sequence is that of Lon protease homolog, mitochondrial from Yarrowia lipolytica (strain CLIB 122 / E 150) (Yeast).